Consider the following 136-residue polypeptide: Protein NrdI (136 aa).

The protein belongs to the NrdI family.

Probably involved in ribonucleotide reductase function. The polypeptide is Protein NrdI (Escherichia coli O7:K1 (strain IAI39 / ExPEC)).